A 282-amino-acid polypeptide reads, in one-letter code: Parvulin-like PPIase (282 aa).

Residues 1–20 form the signal peptide; it reads MKKLSVIFLSVSMLSGIAFA. One can recognise a PpiC domain in the interval 138–231; the sequence is KEQIKVAHIL…FGWHIIKVLE (94 aa).

The protein belongs to the PpiC/parvulin rotamase family.

The protein localises to the cell outer membrane. It carries out the reaction [protein]-peptidylproline (omega=180) = [protein]-peptidylproline (omega=0). This is Parvulin-like PPIase (plp) from Rickettsia conorii (strain ATCC VR-613 / Malish 7).